An 82-amino-acid chain; its full sequence is Mu-conotoxin MrVIA (82 aa).

The first 22 residues, 1-22, serve as a signal peptide directing secretion; sequence MKLTCMMIVAVLFLTAWTLVMA. Positions 23 to 49 are excised as a propeptide; sequence DDSNNGLANHFSKSRDEMEDPEASKLE. Intrachain disulfides connect cysteine 53–cysteine 71, cysteine 60–cysteine 76, and cysteine 70–cysteine 81.

Expressed by the venom duct.

The protein resides in the secreted. MuO-conotoxins are gating-modifier toxins that inhibit sodium current by trapping the domain II voltage sensor in the closed position to prevent opening of the sodium channel. This toxin inhibits rNav1.2/SCN2A (IC(50)=532 nM), rNav1.4/SCN4A (IC(50)=438 nM) and rNav1.7/SCN9A (IC(50)=345 nM). It blocks Nav channels by interacting mainly with the C-terminal part of the pore loop of domain-3. It does not bind on site 1. At small concentration, this toxin also acts as a calcium current agonist, whereas at higher doses it blocks fast-inactivating calcium current. This chain is Mu-conotoxin MrVIA, found in Conus marmoreus (Marble cone).